The primary structure comprises 422 residues: Probable FBD-associated F-box protein At1g32375 (422 aa).

One can recognise an F-box domain in the interval 1–53 (MDKLSQLPEALLVRILSLLSAKDVVSTMVLSKRWQFLWMLVPKLIYDDSYQAI). Positions 342-392 (CWNEPSAVPECLLTSLETLEWVKYEGTEEEKEVAAFILRSGSCLKKVTISS) constitute an FBD domain.

The protein is Probable FBD-associated F-box protein At1g32375 of Arabidopsis thaliana (Mouse-ear cress).